The primary structure comprises 351 residues: Calcium release-activated calcium channel protein 1 (351 aa).

The span at 1-21 (MSVWTTANNSGLETPTKSPIT) shows a compositional bias: polar residues. Disordered regions lie at residues 1-39 (MSVW…TGNH) and 71-141 (HAHP…EDLH). Residues 1–163 (MSVWTTANNS…SRAKLKASSK (163 aa)) lie on the Cytoplasmic side of the membrane. 2 stretches are compositionally biased toward low complexity: residues 22 to 33 (SSVPRAARSSAV) and 80 to 93 (SNSP…SNNS). Residues 94-106 (AGFQRTSISNSLL) show a composition bias toward polar residues. Residues 164-181 (TSALLSGFAMVAMVEVQL) form a helical membrane-spanning segment. The Extracellular portion of the chain corresponds to 182 to 191 (DHDTNVPPGM). The chain crosses the membrane as a helical span at residues 192-212 (LIAFAICTTLLVAVHMLALMI). At 213 to 248 (STCILPNIETVCNLHSISLVHESPHERLHWYIETAW) the chain is on the cytoplasmic side. The chain crosses the membrane as a helical span at residues 249 to 269 (AFSTLLGLILFLLEIAILCWV). Residues 270 to 277 (KFYDLSPP) are Extracellular-facing. The chain crosses the membrane as a helical span at residues 278–298 (AAWSACVVLIPVMIIFMAFAI). At 299 to 351 (HFYRSLVSHKYEVTVSGIRELEMLKEQMEQDHLEHHNNIRNNGMNYGASGDIV) the chain is on the cytoplasmic side.

This sequence belongs to the Orai family. As to quaternary structure, hexamer.

The protein resides in the cell membrane. It carries out the reaction Ca(2+)(in) = Ca(2+)(out). Functionally, pore-forming subunit of inward rectifying Ca(2+) release-activated Ca(2+) (CRAC) channels. Assembles in hexameric CRAC channels that mediate Ca(2+) influx upon depletion of endoplasmic reticulum Ca(2+) store and channel activation by Ca(2+) sensor Stim, a process known as store-operated Ca(2+) entry (SOCE). Regulates transcription factor NFAT nuclear import. This chain is Calcium release-activated calcium channel protein 1, found in Drosophila melanogaster (Fruit fly).